The chain runs to 611 residues: Probable cysteine desulfurase 1 (611 aa).

Residues M1–Q208 form a cargo-loading domain region. K428 bears the N6-(pyridoxal phosphate)lysine mark. The active-site Cysteine persulfide intermediate is the C566.

Belongs to the class-V pyridoxal-phosphate-dependent aminotransferase family. Csd subfamily. As to quaternary structure, there are 1-2 copies of this protein in each type 2A encapsulin shell. Requires pyridoxal 5'-phosphate as cofactor.

Its subcellular location is the encapsulin nanocompartment. The enzyme catalyses (sulfur carrier)-H + L-cysteine = (sulfur carrier)-SH + L-alanine. In terms of biological role, cargo protein of a type 2A encapsulin nanocompartment involved in sulfur metabolism. Cysteine desulfurases mobilize the sulfur from L-cysteine to yield L-alanine, an essential step in sulfur metabolism for biosynthesis of a variety of sulfur-containing biomolecules. The sequence is that of Probable cysteine desulfurase 1 from Mycobacterium leprae (strain TN).